The sequence spans 241 residues: 1-(5-phosphoribosyl)-5-[(5-phosphoribosylamino)methylideneamino] imidazole-4-carboxamide isomerase (241 aa).

D10 functions as the Proton acceptor in the catalytic mechanism. Catalysis depends on D131, which acts as the Proton donor.

It belongs to the HisA/HisF family.

Its subcellular location is the cytoplasm. It carries out the reaction 1-(5-phospho-beta-D-ribosyl)-5-[(5-phospho-beta-D-ribosylamino)methylideneamino]imidazole-4-carboxamide = 5-[(5-phospho-1-deoxy-D-ribulos-1-ylimino)methylamino]-1-(5-phospho-beta-D-ribosyl)imidazole-4-carboxamide. Its pathway is amino-acid biosynthesis; L-histidine biosynthesis; L-histidine from 5-phospho-alpha-D-ribose 1-diphosphate: step 4/9. This is 1-(5-phosphoribosyl)-5-[(5-phosphoribosylamino)methylideneamino] imidazole-4-carboxamide isomerase from Hyphomonas neptunium (strain ATCC 15444).